Here is a 322-residue protein sequence, read N- to C-terminus: CRISPR-associated endonuclease Cas1 (322 aa).

Mn(2+) is bound by residues glutamate 149, histidine 214, and glutamate 229.

It belongs to the CRISPR-associated endonuclease Cas1 family. As to quaternary structure, homodimer, forms a heterotetramer with a Cas2 homodimer. Mg(2+) is required as a cofactor. The cofactor is Mn(2+).

CRISPR (clustered regularly interspaced short palindromic repeat), is an adaptive immune system that provides protection against mobile genetic elements (viruses, transposable elements and conjugative plasmids). CRISPR clusters contain spacers, sequences complementary to antecedent mobile elements, and target invading nucleic acids. CRISPR clusters are transcribed and processed into CRISPR RNA (crRNA). Acts as a dsDNA endonuclease. Involved in the integration of spacer DNA into the CRISPR cassette. The chain is CRISPR-associated endonuclease Cas1 from Pyrococcus horikoshii (strain ATCC 700860 / DSM 12428 / JCM 9974 / NBRC 100139 / OT-3).